The following is a 238-amino-acid chain: uncharacterized protein (238 aa).

To M.thermoautotrophicum MTH564.

This is an uncharacterized protein from Methanocaldococcus jannaschii (strain ATCC 43067 / DSM 2661 / JAL-1 / JCM 10045 / NBRC 100440) (Methanococcus jannaschii).